We begin with the raw amino-acid sequence, 217 residues long: Secreted RxLR effector protein 147 (217 aa).

Residues 1-23 (MRGAFYVTTALLITNSIRTAAEA) form the signal peptide. Residues 22-52 (EANPPGRQPMSHHDGVVPGKSSPRRFLQGSH) are disordered. Residues 46–67 (RFLQGSHEPHDKFAVSAANEER) carry the RxLR-dEER motif.

It belongs to the RxLR effector family.

It is found in the secreted. It localises to the host nucleus. Its subcellular location is the host cytoplasm. Its function is as follows. Secreted effector that completely suppresses the host cell death induced by cell death-inducing proteins. The chain is Secreted RxLR effector protein 147 from Plasmopara viticola (Downy mildew of grapevine).